The following is a 282-amino-acid chain: UPF0761 membrane protein HAPS_1376 (282 aa).

A run of 6 helical transmembrane segments spans residues 32–52, 89–109, 124–144, 170–190, 202–222, and 234–254; these read LLSLVPLIMVVFSVFTLLPIF, MGIISIIGLVVVAVMLISSID, VILSFVVYLAVLIFAPIFAGA, LLKFIPFVLTWLLFALVYLIV, VGALFAGVFFTLGKQIFIWYI, and ALATIPIMIVWIHLSWQVVLL.

The protein belongs to the UPF0761 family.

Its subcellular location is the cell inner membrane. This chain is UPF0761 membrane protein HAPS_1376, found in Glaesserella parasuis serovar 5 (strain SH0165) (Haemophilus parasuis).